We begin with the raw amino-acid sequence, 149 residues long: Large ribosomal subunit protein bL9 (149 aa).

Belongs to the bacterial ribosomal protein bL9 family.

Functionally, binds to the 23S rRNA. In Endomicrobium trichonymphae, this protein is Large ribosomal subunit protein bL9.